The primary structure comprises 302 residues: D-alanine--D-alanine ligase (302 aa).

Residues 104-296 (KLVFERFAIP…FPDLVTWLVE (193 aa)) form the ATP-grasp domain. Position 130 to 183 (130 to 183 (AMARPYVVKPLDQGSSVGVTIVTSETNDLPFSRDDWPYGRQVMVERFIPGRELT)) interacts with ATP. The Mg(2+) site is built by Asp251, Glu263, and Asn265.

This sequence belongs to the D-alanine--D-alanine ligase family. It depends on Mg(2+) as a cofactor. The cofactor is Mn(2+).

The protein resides in the cytoplasm. It carries out the reaction 2 D-alanine + ATP = D-alanyl-D-alanine + ADP + phosphate + H(+). Its pathway is cell wall biogenesis; peptidoglycan biosynthesis. Its function is as follows. Cell wall formation. The polypeptide is D-alanine--D-alanine ligase (Rhodospirillum rubrum (strain ATCC 11170 / ATH 1.1.1 / DSM 467 / LMG 4362 / NCIMB 8255 / S1)).